Here is a 165-residue protein sequence, read N- to C-terminus: Bacterial non-heme ferritin (165 aa).

In terms of domain architecture, Ferritin-like diiron spans 1-145 (MLKPEMIEKL…SIIDKLSLAG (145 aa)). Positions 17, 49, 50, 53, 94, 126, 127, and 130 each coordinate Fe cation.

Belongs to the ferritin family. Prokaryotic subfamily. In terms of assembly, homooligomer of 24 subunits that assemble into a spherical protein shell (12 +/- 1 nM diameter) that can sequester at least 2000 iron atoms.

It localises to the cytoplasm. The catalysed reaction is 4 Fe(2+) + O2 + 6 H2O = 4 iron(III) oxide-hydroxide + 12 H(+). Its function is as follows. Iron-storage protein. In Escherichia coli O157:H7, this protein is Bacterial non-heme ferritin (ftnA).